The following is a 183-amino-acid chain: Mid1-interacting protein 1 (183 aa).

Residue M1 is modified to N-acetylmethionine. Phosphoserine is present on residues S75 and S79.

It belongs to the SPOT14 family. In terms of assembly, homodimer in the absence of THRSP. Heterodimer with THRSP. The homodimer interacts with ACACA and ACACB. Promotes polymerization of Acetyl-CoA carboxylase to form complexes that contain MID1IP1 and ACACA and/or ACACB. Interaction with THRSP interferes with ACACA binding.

Its subcellular location is the nucleus. It is found in the cytoplasm. The protein localises to the cytoskeleton. Plays a role in the regulation of lipogenesis in liver. Up-regulates ACACA enzyme activity. Required for efficient lipid biosynthesis, including triacylglycerol, diacylglycerol and phospholipid. Involved in stabilization of microtubules. The protein is Mid1-interacting protein 1 (MID1IP1) of Homo sapiens (Human).